A 187-amino-acid chain; its full sequence is Peptidyl-tRNA hydrolase (187 aa).

Position 15 (Tyr-15) interacts with tRNA. His-20 acts as the Proton acceptor in catalysis. The tRNA site is built by Phe-64, Asn-66, and Asn-112.

The protein belongs to the PTH family. In terms of assembly, monomer.

It is found in the cytoplasm. It catalyses the reaction an N-acyl-L-alpha-aminoacyl-tRNA + H2O = an N-acyl-L-amino acid + a tRNA + H(+). Hydrolyzes ribosome-free peptidyl-tRNAs (with 1 or more amino acids incorporated), which drop off the ribosome during protein synthesis, or as a result of ribosome stalling. Functionally, catalyzes the release of premature peptidyl moieties from peptidyl-tRNA molecules trapped in stalled 50S ribosomal subunits, and thus maintains levels of free tRNAs and 50S ribosomes. The protein is Peptidyl-tRNA hydrolase of Parabacteroides distasonis (strain ATCC 8503 / DSM 20701 / CIP 104284 / JCM 5825 / NCTC 11152).